Reading from the N-terminus, the 237-residue chain is Urease subunit alpha (237 aa).

Residues 1-102 are urease gamma; the sequence is MKLTPKELDK…LVTIHTPVED (102 aa). Positions 103–237 are urease beta; the sequence is NGKLAPGEVF…CGCEATKDKQ (135 aa).

It in the N-terminal section; belongs to the urease gamma subunit family. This sequence in the C-terminal section; belongs to the urease beta subunit family. In terms of assembly, heterohexamer of 3 UreA (alpha) and 3 UreB (beta) subunits.

It localises to the cytoplasm. The catalysed reaction is urea + 2 H2O + H(+) = hydrogencarbonate + 2 NH4(+). The protein operates within nitrogen metabolism; urea degradation; CO(2) and NH(3) from urea (urease route): step 1/1. This chain is Urease subunit alpha, found in Helicobacter felis.